The sequence spans 392 residues: Phospho-N-acetylmuramoyl-pentapeptide-transferase (392 aa).

A run of 11 helical transmembrane segments spans residues 24-44 (YLTM…LLAG), 76-96 (TMGG…WFDL), 100-120 (FVWI…VDDW), 137-157 (YFWQ…CISE), 170-190 (WVQS…VPFF), 193-213 (VSYP…IVGA), 225-245 (GLAI…AYVT), 262-282 (SGEL…FLWF), 289-309 (VFMG…IAVI), 314-334 (IVLA…MLQV), and 369-389 (QVVI…LSTL).

Belongs to the glycosyltransferase 4 family. MraY subfamily. Mg(2+) serves as cofactor.

The protein localises to the cell inner membrane. It catalyses the reaction UDP-N-acetyl-alpha-D-muramoyl-L-alanyl-gamma-D-glutamyl-meso-2,6-diaminopimeloyl-D-alanyl-D-alanine + di-trans,octa-cis-undecaprenyl phosphate = di-trans,octa-cis-undecaprenyl diphospho-N-acetyl-alpha-D-muramoyl-L-alanyl-D-glutamyl-meso-2,6-diaminopimeloyl-D-alanyl-D-alanine + UMP. The protein operates within cell wall biogenesis; peptidoglycan biosynthesis. Functionally, catalyzes the initial step of the lipid cycle reactions in the biosynthesis of the cell wall peptidoglycan: transfers peptidoglycan precursor phospho-MurNAc-pentapeptide from UDP-MurNAc-pentapeptide onto the lipid carrier undecaprenyl phosphate, yielding undecaprenyl-pyrophosphoryl-MurNAc-pentapeptide, known as lipid I. In Delftia acidovorans (strain DSM 14801 / SPH-1), this protein is Phospho-N-acetylmuramoyl-pentapeptide-transferase.